Consider the following 320-residue polypeptide: GTP 3',8-cyclase (320 aa).

The Radical SAM core domain occupies 5–225; the sequence is QFGRKINYLR…IQLIKKDEKA (221 aa). R14 is a binding site for GTP. Positions 21 and 25 each coordinate [4Fe-4S] cluster. Y27 provides a ligand contact to S-adenosyl-L-methionine. Position 28 (C28) interacts with [4Fe-4S] cluster. R64 provides a ligand contact to GTP. G68 serves as a coordination point for S-adenosyl-L-methionine. T95 contacts GTP. S119 is an S-adenosyl-L-methionine binding site. K155 serves as a coordination point for GTP. S-adenosyl-L-methionine is bound at residue M189. 2 residues coordinate [4Fe-4S] cluster: C248 and C251. Position 253–255 (253–255) interacts with GTP; that stretch reads RIR. C265 provides a ligand contact to [4Fe-4S] cluster.

It belongs to the radical SAM superfamily. MoaA family. As to quaternary structure, monomer and homodimer. The cofactor is [4Fe-4S] cluster.

The catalysed reaction is GTP + AH2 + S-adenosyl-L-methionine = (8S)-3',8-cyclo-7,8-dihydroguanosine 5'-triphosphate + 5'-deoxyadenosine + L-methionine + A + H(+). The protein operates within cofactor biosynthesis; molybdopterin biosynthesis. Its function is as follows. Catalyzes the cyclization of GTP to (8S)-3',8-cyclo-7,8-dihydroguanosine 5'-triphosphate. The polypeptide is GTP 3',8-cyclase (Campylobacter jejuni (strain RM1221)).